Reading from the N-terminus, the 436-residue chain is UPF0597 protein YhaM (436 aa).

It belongs to the UPF0597 family.

In Salmonella dublin (strain CT_02021853), this protein is UPF0597 protein YhaM.